A 105-amino-acid polypeptide reads, in one-letter code: Pyrimidine/purine nucleoside phosphorylase (105 aa).

The protein belongs to the nucleoside phosphorylase PpnP family.

It catalyses the reaction a purine D-ribonucleoside + phosphate = a purine nucleobase + alpha-D-ribose 1-phosphate. The enzyme catalyses adenosine + phosphate = alpha-D-ribose 1-phosphate + adenine. It carries out the reaction cytidine + phosphate = cytosine + alpha-D-ribose 1-phosphate. The catalysed reaction is guanosine + phosphate = alpha-D-ribose 1-phosphate + guanine. It catalyses the reaction inosine + phosphate = alpha-D-ribose 1-phosphate + hypoxanthine. The enzyme catalyses thymidine + phosphate = 2-deoxy-alpha-D-ribose 1-phosphate + thymine. It carries out the reaction uridine + phosphate = alpha-D-ribose 1-phosphate + uracil. The catalysed reaction is xanthosine + phosphate = alpha-D-ribose 1-phosphate + xanthine. In terms of biological role, catalyzes the phosphorolysis of diverse nucleosides, yielding D-ribose 1-phosphate and the respective free bases. Can use uridine, adenosine, guanosine, cytidine, thymidine, inosine and xanthosine as substrates. Also catalyzes the reverse reactions. The polypeptide is Pyrimidine/purine nucleoside phosphorylase (Paracidovorax citrulli (strain AAC00-1) (Acidovorax citrulli)).